The chain runs to 130 residues: Small ribosomal subunit protein uS9 (130 aa).

Residues 99-130 (KSAGMLTRDPRMKERKKPGLKKARKASQFSKR) are disordered. The segment covering 111 to 130 (KERKKPGLKKARKASQFSKR) has biased composition (basic residues).

It belongs to the universal ribosomal protein uS9 family.

The sequence is that of Small ribosomal subunit protein uS9 from Latilactobacillus sakei subsp. sakei (strain 23K) (Lactobacillus sakei subsp. sakei).